Reading from the N-terminus, the 483-residue chain is Cysteine proteinase 1, mitochondrial (483 aa).

Residues M1–M30 constitute a mitochondrion transit peptide. Catalysis depends on residues C102, H398, and N421. Position 483 (K483) is a propeptide, removed in mature form; by autocatalysis.

It belongs to the peptidase C1 family. Homohexamer. Binds to nucleic acids. Binds single-stranded DNA and RNA with higher affinity than double-stranded DNA. Post-translationally, the N-terminus of isoform Cytoplasmic is blocked.

Its subcellular location is the mitochondrion. It is found in the cytoplasm. It catalyses the reaction Inactivates bleomycin B2 (a cytotoxic glycometallopeptide) by hydrolysis of a carboxyamide bond of beta-aminoalanine, but also shows general aminopeptidase activity. The specificity varies somewhat with source, but amino acid arylamides of Met, Leu and Ala are preferred.. Its activity is regulated as follows. Inhibited by E64, a specific inhibitor of cysteine proteases, N-ethylmaleimide, iodacetamide, and mercury and zinc ions. Functionally, the normal physiological role of the enzyme is unknown, but it is not essential for the viability of yeast cells. Has aminopeptidase activity, shortening substrate peptides sequentially by 1 amino acid. Has bleomycin hydrolase activity, which can protect the cell from the toxic effects of bleomycin. Has homocysteine-thiolactonase activity, protecting the cell against homocysteine toxicity. Acts as a repressor in the GAL4 regulatory system, but this does not require either the peptidase or nucleic acid-binding activities. This is Cysteine proteinase 1, mitochondrial (LAP3) from Saccharomyces cerevisiae (strain YJM789) (Baker's yeast).